The chain runs to 295 residues: UDP-N-acetylenolpyruvoylglucosamine reductase (295 aa).

The FAD-binding PCMH-type domain maps to K23–G188. R167 is a catalytic residue. The active-site Proton donor is the S217. Residue E287 is part of the active site.

It belongs to the MurB family. It depends on FAD as a cofactor.

It is found in the cytoplasm. It carries out the reaction UDP-N-acetyl-alpha-D-muramate + NADP(+) = UDP-N-acetyl-3-O-(1-carboxyvinyl)-alpha-D-glucosamine + NADPH + H(+). The protein operates within cell wall biogenesis; peptidoglycan biosynthesis. Cell wall formation. This Streptococcus pyogenes serotype M18 (strain MGAS8232) protein is UDP-N-acetylenolpyruvoylglucosamine reductase.